A 342-amino-acid polypeptide reads, in one-letter code: Endo-1,4-beta-xylanase A (342 aa).

In terms of domain architecture, GH10 spans 11-342; the sequence is EMLNLSLAKT…KEALYRILRF (332 aa). Glu144 serves as the catalytic Proton donor. Glu252 functions as the Nucleophile in the catalytic mechanism.

It belongs to the glycosyl hydrolase 10 (cellulase F) family. Cytoplasmic xylanase subfamily.

It is found in the cytoplasm. The enzyme catalyses Endohydrolysis of (1-&gt;4)-beta-D-xylosidic linkages in xylans.. It participates in glycan degradation; xylan degradation. The chain is Endo-1,4-beta-xylanase A (xynA) from Caldicellulosiruptor saccharolyticus (Caldocellum saccharolyticum).